The sequence spans 327 residues: Glycerol-3-phosphate dehydrogenase [NAD(P)+] (327 aa).

Positions 13, 34, and 107 each coordinate NADPH. Sn-glycerol 3-phosphate contacts are provided by K107 and G135. A139 lines the NADPH pocket. 5 residues coordinate sn-glycerol 3-phosphate: K190, D243, S253, R254, and N255. Residue K190 is the Proton acceptor of the active site. NADPH is bound at residue R254. Positions 276 and 277 each coordinate NADPH.

It belongs to the NAD-dependent glycerol-3-phosphate dehydrogenase family.

The protein resides in the cytoplasm. It carries out the reaction sn-glycerol 3-phosphate + NAD(+) = dihydroxyacetone phosphate + NADH + H(+). The catalysed reaction is sn-glycerol 3-phosphate + NADP(+) = dihydroxyacetone phosphate + NADPH + H(+). Its pathway is membrane lipid metabolism; glycerophospholipid metabolism. In terms of biological role, catalyzes the reduction of the glycolytic intermediate dihydroxyacetone phosphate (DHAP) to sn-glycerol 3-phosphate (G3P), the key precursor for phospholipid synthesis. The polypeptide is Glycerol-3-phosphate dehydrogenase [NAD(P)+] (Rhizobium etli (strain CIAT 652)).